The chain runs to 165 residues: Protein NKG7 (165 aa).

4 helical membrane-spanning segments follow: residues 9–29, 61–81, 92–112, and 133–153; these read LLGG…DFWF, FSIM…LSCF, LVST…MAVY, and FYLG…SLGA.

The protein belongs to the PMP-22/EMP/MP20 family. Expressed in activated T-cells, in kidney, liver, lung and pancreas. Not expressed in brain, heart, or skeletal muscle. Expressed at high levels in TCR gamma delta-expressing CTL clones, and in some TCR alpha beta-expressing CTL clones (both CD4+ and CD8+), but is not expressed in other TCR alpha beta-expressing CTL clones and in cell lines representing B-cells, monocytes, and myeloid cells.

The protein localises to the cell membrane. It is found in the cytolytic granule membrane. In terms of biological role, regulates cytotoxic granule exocytosis in effector lymphocytes, thus acting as a critical mediator of inflammation in a broad range of infectious and non-infectious diseases. Essential for cytotoxic degranulation of natural killer (NK) cells and CD8(+) T-cells and for the activation of CD4(+) T-cells following infection. Plays a critical role in CD8(+) T-cell and NK cell-mediated cytolysis of target cells and contributes to the cytolytic activity via the perforin/granzyme pathway by enhancing exocytosis of LAMP1-carrying lytic granules. Contributes to NK cell-mediated control of cancer metastasis. This chain is Protein NKG7 (NKG7), found in Homo sapiens (Human).